The following is a 154-amino-acid chain: Myoglobin (154 aa).

One can recognise a Globin domain in the interval 2–148 (GLSDQEWQQV…FRNDMASKYK (147 aa)). Residue His65 participates in nitrite binding. Residue His65 participates in O2 binding. Residue His94 participates in heme b binding.

The protein belongs to the globin family. As to quaternary structure, monomeric.

The protein resides in the cytoplasm. It localises to the sarcoplasm. The catalysed reaction is Fe(III)-heme b-[protein] + nitric oxide + H2O = Fe(II)-heme b-[protein] + nitrite + 2 H(+). It carries out the reaction H2O2 + AH2 = A + 2 H2O. In terms of biological role, monomeric heme protein which primary function is to store oxygen and facilitate its diffusion within muscle tissues. Reversibly binds oxygen through a pentacoordinated heme iron and enables its timely and efficient release as needed during periods of heightened demand. Depending on the oxidative conditions of tissues and cells, and in addition to its ability to bind oxygen, it also has a nitrite reductase activity whereby it regulates the production of bioactive nitric oxide. Under stress conditions, like hypoxia and anoxia, it also protects cells against reactive oxygen species thanks to its pseudoperoxidase activity. This is Myoglobin (MB) from Anas poecilorhyncha (Indian spot-billed duck).